The following is a 368-amino-acid chain: MTPTTLPTSQRAVQQDGNGKLHVANNAAIPSLLPGHVLVKTYAVALNPSDYKIQKNFPIPGAYVGIDFSGTVVQVANDVDSINPGTEVFGAAFTFSSAHRLANGAFAEYVRVRADLLFRIPSEQQCQNDGDLTLFKAATLGTAMSTCLLSLWSPDALGLVGKPEEPVLSEKPIPVLVYGGSTSVGTIAIQLLKLSGYDPIATCSPRSFDLVRSRGASNVFDYSSADVALKIKTHTGGRLKYALDCISDVASVATCYAAIQRPGGRYVSLEYIPDELLAQRRAVRPNFVLSAELYGEEIVLGEEAYDRPANREKHQLAVQNVGMLQRLIDSGGLKTHPTEEIEGGLEGVVKGLVALAGGGHPRKLVAVV.

49–52 (SDYK) contributes to the NADP(+) binding site. 135–142 (FKAATLGT) provides a ligand contact to substrate. Residues 204-207 (SPRS), Tyr-222, and 269-270 (LE) each bind NADP(+). 290 to 294 (SAELY) contributes to the substrate binding site. Residue 360–361 (HP) participates in NADP(+) binding.

This sequence belongs to the zinc-containing alcohol dehydrogenase family. As to quaternary structure, monomer.

It participates in secondary metabolite biosynthesis. Its function is as follows. Trans-enoyl reductase; part of the gene cluster that mediates the biosynthesis of wortmanamides A and B, reduced long-chain polyketides amidated with a specific omega-amino acid, 5-aminopentanoic acid (5PA). The PKS modules of TwmB are involved in the synthesis of the polyketide backbone, whereas the non-canonical C domain of TwmB is a bonafide condensation domain that specifically selects 5PA and catalyzes amidation to release polyketide chain. The C domain clearly prefers C16 and C18 fatty acyl substrates, which is consistent with simultaneous formation of both octaketide and nonaketide acyl amides wortmanamides A and B. Because TwmB lacks a designated enoylreductase (ER) domain, the required activity is provided the enoyl reductase TwmE. The roles of the remaining enzymes have still to be clarified. The sequence is that of Trans-enoyl reductase TwmE from Talaromyces wortmannii (Penicillium wortmannii).